We begin with the raw amino-acid sequence, 512 residues long: 2-isopropylmalate synthase (512 aa).

The Pyruvate carboxyltransferase domain occupies 5-268; that stretch reads LIIFDTTLRD…DLNIDTTHIV (264 aa). Mn(2+)-binding residues include Asp14, His202, His204, and Asn239. Residues 394 to 512 are regulatory domain; that stretch reads AFVSLSQHSE…SQAEKVAAQG (119 aa).

The protein belongs to the alpha-IPM synthase/homocitrate synthase family. LeuA type 1 subfamily. In terms of assembly, homodimer. It depends on Mn(2+) as a cofactor.

The protein localises to the cytoplasm. It carries out the reaction 3-methyl-2-oxobutanoate + acetyl-CoA + H2O = (2S)-2-isopropylmalate + CoA + H(+). The protein operates within amino-acid biosynthesis; L-leucine biosynthesis; L-leucine from 3-methyl-2-oxobutanoate: step 1/4. Its function is as follows. Catalyzes the condensation of the acetyl group of acetyl-CoA with 3-methyl-2-oxobutanoate (2-ketoisovalerate) to form 3-carboxy-3-hydroxy-4-methylpentanoate (2-isopropylmalate). The polypeptide is 2-isopropylmalate synthase (Variovorax paradoxus (strain S110)).